A 270-amino-acid polypeptide reads, in one-letter code: NAD kinase (270 aa).

Asp-63 (proton acceptor) is an active-site residue. NAD(+) contacts are provided by residues 63 to 64 (DG), 131 to 132 (NE), Lys-142, Arg-159, Asp-161, 172 to 177 (TAYAMS), Ala-196, and Gln-230.

The protein belongs to the NAD kinase family. Requires a divalent metal cation as cofactor.

It localises to the cytoplasm. It carries out the reaction NAD(+) + ATP = ADP + NADP(+) + H(+). In terms of biological role, involved in the regulation of the intracellular balance of NAD and NADP, and is a key enzyme in the biosynthesis of NADP. Catalyzes specifically the phosphorylation on 2'-hydroxyl of the adenosine moiety of NAD to yield NADP. The polypeptide is NAD kinase (Methanoculleus marisnigri (strain ATCC 35101 / DSM 1498 / JR1)).